We begin with the raw amino-acid sequence, 2066 residues long: Kinesin-like protein KIN-12C (2066 aa).

Disordered stretches follow at residues 1-41 (MSRN…SQIQ) and 59-116 (RAQH…RVSL). The segment covering 20 to 33 (SLSLFSPSRPPLNS) has biased composition (low complexity). A compositionally biased stretch (basic and acidic residues) spans 67-76 (GPEKKFEVLE). Positions 99–109 (EPNSAQSTPTR) are enriched in polar residues. Residues 168–505 (NVQVLIRLRP…LKFAQRAKLI (338 aa)) enclose the Kinesin motor domain. Residue 249-256 (GQTGSGKT) participates in ATP binding. 3 microtubules-binding regions span residues 375–379 (SSRSH), 406–412 (VDLAGSE), and 454–458 (HVPYR). Coiled coils occupy residues 1521-1618 (DLKT…VDEI) and 1650-1772 (KIYA…EILL). Disordered regions lie at residues 1803-1823 (SAAE…RGSS) and 2043-2066 (KYRK…TRYR). The stretch at 1905-2051 (VQRVVEKAQQ…AKYRKTSNNH (147 aa)) forms a coiled coil. Residues 2047–2066 (TSNNHPSTRTQGQSSGTRYR) are compositionally biased toward polar residues.

The protein belongs to the TRAFAC class myosin-kinesin ATPase superfamily. Kinesin family. KIN-12 subfamily. As to quaternary structure, interacts with TAN. Interacts with RANGAP1. Expressed in tissues enriched in dividing cells, such as root meristems, root primordia, and leaf primordia/young leaves.

It localises to the cytoplasm. Its subcellular location is the cytoskeleton. It is found in the phragmoplast. Functionally, involved in the spatial control of cytokinesis by a proper phragmoplast guidance. Localizes TAN to the cortical division sites (CDS) during cytokinesis via direct binding. The chain is Kinesin-like protein KIN-12C from Arabidopsis thaliana (Mouse-ear cress).